Here is a 225-residue protein sequence, read N- to C-terminus: NAD(P)H-quinone oxidoreductase subunit K, chloroplastic (225 aa).

Residues Cys43, Cys44, Cys108, and Cys139 each coordinate [4Fe-4S] cluster.

It belongs to the complex I 20 kDa subunit family. As to quaternary structure, NDH is composed of at least 16 different subunits, 5 of which are encoded in the nucleus. Requires [4Fe-4S] cluster as cofactor.

Its subcellular location is the plastid. It is found in the chloroplast thylakoid membrane. The catalysed reaction is a plastoquinone + NADH + (n+1) H(+)(in) = a plastoquinol + NAD(+) + n H(+)(out). It carries out the reaction a plastoquinone + NADPH + (n+1) H(+)(in) = a plastoquinol + NADP(+) + n H(+)(out). Functionally, NDH shuttles electrons from NAD(P)H:plastoquinone, via FMN and iron-sulfur (Fe-S) centers, to quinones in the photosynthetic chain and possibly in a chloroplast respiratory chain. The immediate electron acceptor for the enzyme in this species is believed to be plastoquinone. Couples the redox reaction to proton translocation, and thus conserves the redox energy in a proton gradient. The chain is NAD(P)H-quinone oxidoreductase subunit K, chloroplastic from Nymphaea alba (White water-lily).